Consider the following 219-residue polypeptide: Peptide methionine sulfoxide reductase MsrA (219 aa).

A disordered region spans residues 1 to 20 (MGLFRSPRQNLPTAADALPG). Residue Cys55 is part of the active site.

It belongs to the MsrA Met sulfoxide reductase family.

It catalyses the reaction L-methionyl-[protein] + [thioredoxin]-disulfide + H2O = L-methionyl-(S)-S-oxide-[protein] + [thioredoxin]-dithiol. It carries out the reaction [thioredoxin]-disulfide + L-methionine + H2O = L-methionine (S)-S-oxide + [thioredoxin]-dithiol. Has an important function as a repair enzyme for proteins that have been inactivated by oxidation. Catalyzes the reversible oxidation-reduction of methionine sulfoxide in proteins to methionine. This Rhodospirillum centenum (strain ATCC 51521 / SW) protein is Peptide methionine sulfoxide reductase MsrA.